The primary structure comprises 61 residues: Large ribosomal subunit protein eL24 (61 aa).

Zn(2+) is bound by residues C7, C10, C33, and C37. The segment at 7-37 adopts a C4-type zinc-finger fold; it reads CSFCGGDIPPATGMMHVRNDGTILWFCSNKC.

This sequence belongs to the eukaryotic ribosomal protein eL24 family. In terms of assembly, part of the 50S ribosomal subunit. Forms a cluster with proteins L3 and L14. Zn(2+) is required as a cofactor.

In terms of biological role, binds to the 23S rRNA. This chain is Large ribosomal subunit protein eL24, found in Metallosphaera sedula (strain ATCC 51363 / DSM 5348 / JCM 9185 / NBRC 15509 / TH2).